The chain runs to 347 residues: D-fructose 1,6-bisphosphatase class 2/sedoheptulose 1,7-bisphosphatase (347 aa).

Mn(2+) contacts are provided by Asp-33, Glu-57, Asp-97, and Glu-100. Substrate contacts are provided by residues 100–102 (EGT), Tyr-131, 176–178 (RKR), and 198–200 (DGD). Glu-225 serves as a coordination point for Mn(2+).

It belongs to the FBPase class 2 family. Homotetramer. Requires Mn(2+) as cofactor.

It catalyses the reaction beta-D-fructose 1,6-bisphosphate + H2O = beta-D-fructose 6-phosphate + phosphate. The catalysed reaction is D-sedoheptulose 1,7-bisphosphate + H2O = D-sedoheptulose 7-phosphate + phosphate. The protein operates within carbohydrate biosynthesis; Calvin cycle. Catalyzes the hydrolysis of fructose 1,6-bisphosphate (Fru 1,6-P2) and sedoheptulose 1,7-bisphosphate (Sed 1,7-P2) to fructose 6-phosphate and sedoheptulose 7-phosphate, respectively. The protein is D-fructose 1,6-bisphosphatase class 2/sedoheptulose 1,7-bisphosphatase of Synechococcus sp. (strain JA-3-3Ab) (Cyanobacteria bacterium Yellowstone A-Prime).